A 641-amino-acid chain; its full sequence is Serine/threonine-protein kinase pink-1, mitochondrial (641 aa).

The N-terminal 74 residues, 1–74 (MSMKRFGKAA…TRHGRVFRPF (74 aa)), are a transit peptide targeting the mitochondrion. In terms of domain architecture, Protein kinase spans 137-483 (YEFGEFLGQG…AANALNLSLF (347 aa)). Residues 143 to 151 (LGQGCNAAV) and lysine 199 each bind ATP. Catalysis depends on aspartate 338, which acts as the Proton acceptor.

Belongs to the protein kinase superfamily. Ser/Thr protein kinase family. Requires Mg(2+) as cofactor. Autophosphorylated.

It is found in the mitochondrion. It catalyses the reaction L-seryl-[protein] + ATP = O-phospho-L-seryl-[protein] + ADP + H(+). The enzyme catalyses L-threonyl-[protein] + ATP = O-phospho-L-threonyl-[protein] + ADP + H(+). In terms of biological role, protects against mitochondrial dysfunction during cellular stress, potentially by phosphorylating mitochondrial proteins. Plays a role in mitophagy. The polypeptide is Serine/threonine-protein kinase pink-1, mitochondrial (pink-1) (Caenorhabditis elegans).